A 621-amino-acid chain; its full sequence is pH-response transcription factor pacc-1 (621 aa).

The segment covering 1 to 14 (MSSTPAQENGTVNG) has biased composition (polar residues). Residues 1 to 87 (MSSTPAQENG…PTTASNSSAP (87 aa)) form a disordered region. The span at 15 to 87 (ANAAPAPAPA…PTTASNSSAP (73 aa)) shows a compositional bias: low complexity. C2H2-type zinc fingers lie at residues 95–120 (LVCR…CEKH), 131–155 (LTCQ…VRVH), and 161–183 (HKCD…VKTH). Disordered stretches follow at residues 395 to 539 (PTYA…PETY) and 566 to 621 (DEDD…PRIN). 2 stretches are compositionally biased toward low complexity: residues 409-423 (ASLA…PHSA) and 436-465 (SYTS…VSYP). Residues 464–467 (YPTL) carry the YPX[LI] motif 1 motif. A compositionally biased stretch (polar residues) spans 476–486 (PSTSGLGSNFT). Basic and acidic residues predominate over residues 502 to 511 (RAADEADRAP). Over residues 515-525 (ASEQATVSSPS) the composition is skewed to polar residues. Low complexity predominate over residues 583–595 (RNQQQRNQQQQQQ). Residues 614–617 (YPVL) carry the YPX[LI] motif 2 motif.

The protein belongs to the pacC/RIM101 family. As to quaternary structure, binds to DNA. Interacts with palA/prr-1, which binds to the two YPX[LI] motifs and is required for proteolytic processing. Post-translationally, activated by C-terminal proteolytic cleavage by signaling protease (probably palB/RIM13) at neutral to alkaline ambient pH.

It localises to the cytoplasm. It is found in the nucleus. Its function is as follows. Transcription factor that mediates regulation of both acid- and alkaline-expressed genes in response to ambient pH. At alkaline ambient pH, activates transcription of alkaline-expressed genes (including pacc-1 itself) and represses transcription of acid-expressed genes. The sequence is that of pH-response transcription factor pacc-1 (pacc-1) from Neurospora crassa (strain ATCC 24698 / 74-OR23-1A / CBS 708.71 / DSM 1257 / FGSC 987).